Here is a 184-residue protein sequence, read N- to C-terminus: Ribosome-recycling factor (184 aa).

It belongs to the RRF family.

Its subcellular location is the cytoplasm. Functionally, responsible for the release of ribosomes from messenger RNA at the termination of protein biosynthesis. May increase the efficiency of translation by recycling ribosomes from one round of translation to another. This is Ribosome-recycling factor from Borrelia recurrentis (strain A1).